An 831-amino-acid chain; its full sequence is Phenylalanine--tRNA ligase beta subunit (831 aa).

The tRNA-binding domain occupies 44 to 155 (GPVDGPVTVG…GAAEPGADGA (112 aa)). The region spanning 414–489 (WSPPPIRMGV…RLEGLEVIPS (76 aa)) is the B5 domain. Residues Asp-467, Asp-473, Glu-476, and Glu-477 each coordinate Mg(2+). In terms of domain architecture, FDX-ACB spans 737–830 (SPYPAVFQDV…AAERVGAVLR (94 aa)).

Belongs to the phenylalanyl-tRNA synthetase beta subunit family. Type 1 subfamily. In terms of assembly, tetramer of two alpha and two beta subunits. Requires Mg(2+) as cofactor.

The protein localises to the cytoplasm. It catalyses the reaction tRNA(Phe) + L-phenylalanine + ATP = L-phenylalanyl-tRNA(Phe) + AMP + diphosphate + H(+). The chain is Phenylalanine--tRNA ligase beta subunit (pheT) from Mycobacterium tuberculosis (strain ATCC 25618 / H37Rv).